Here is a 429-residue protein sequence, read N- to C-terminus: 5-methylthioadenosine/S-adenosylhomocysteine deaminase (429 aa).

Histidine 65 and histidine 67 together coordinate Zn(2+). Substrate-binding residues include glutamate 94 and histidine 182. Histidine 209 is a binding site for Zn(2+). Glutamate 212 and aspartate 297 together coordinate substrate. Aspartate 297 provides a ligand contact to Zn(2+).

It belongs to the metallo-dependent hydrolases superfamily. MTA/SAH deaminase family. Zn(2+) is required as a cofactor.

The enzyme catalyses S-adenosyl-L-homocysteine + H2O + H(+) = S-inosyl-L-homocysteine + NH4(+). It carries out the reaction S-methyl-5'-thioadenosine + H2O + H(+) = S-methyl-5'-thioinosine + NH4(+). Functionally, catalyzes the deamination of 5-methylthioadenosine and S-adenosyl-L-homocysteine into 5-methylthioinosine and S-inosyl-L-homocysteine, respectively. Is also able to deaminate adenosine. The sequence is that of 5-methylthioadenosine/S-adenosylhomocysteine deaminase from Clostridium tetani (strain Massachusetts / E88).